Here is a 482-residue protein sequence, read N- to C-terminus: Cardiolipin synthase (482 aa).

A run of 2 helical transmembrane segments spans residues 4–24 and 34–54; these read LAYL…VTVF and WAWL…YLIF. PLD phosphodiesterase domains lie at 217–244 and 395–422; these read LNYR…GDEY and DNGF…DFRS. Residues histidine 222, lysine 224, aspartate 229, histidine 400, lysine 402, and aspartate 407 contribute to the active site.

Belongs to the phospholipase D family. Cardiolipin synthase subfamily.

The protein resides in the cell membrane. The catalysed reaction is 2 a 1,2-diacyl-sn-glycero-3-phospho-(1'-sn-glycerol) = a cardiolipin + glycerol. Functionally, catalyzes the reversible phosphatidyl group transfer from one phosphatidylglycerol molecule to another to form cardiolipin (CL) (diphosphatidylglycerol) and glycerol. The chain is Cardiolipin synthase (cls) from Listeria welshimeri serovar 6b (strain ATCC 35897 / DSM 20650 / CCUG 15529 / CIP 8149 / NCTC 11857 / SLCC 5334 / V8).